A 325-amino-acid chain; its full sequence is Diacylglycerol acyltransferase/mycolyltransferase Ag85B (325 aa).

The N-terminal stretch at 1–40 (MTDVSRKIRAWGRRLMIGTAAAVVLPGLVGLAGGAATAGA) is a signal peptide. Position 82–83 (82–83 (LR)) interacts with substrate. Positions 98–108 (FEWYYQSGLSI) are fibronectin-binding. Residues Cys-127 and Cys-132 are joined by a disulfide bond. Positions 166 and 194 each coordinate substrate. Residue Ser-166 is the Nucleophile of the active site. Glu-270 is a catalytic residue. Residues 272–275 (FVRS), Lys-279, and 302–304 (HSW) each bind substrate. His-302 is an active-site residue.

It belongs to the mycobacterial A85 antigen family.

The protein localises to the secreted. The catalysed reaction is 2 alpha,alpha'-trehalose 6-mycolate = alpha,alpha'-trehalose 6,6'-bismycolate + alpha,alpha-trehalose. It carries out the reaction an acyl-CoA + a 1,2-diacyl-sn-glycerol = a triacyl-sn-glycerol + CoA. The antigen 85 proteins (FbpA, FbpB, FbpC) are responsible for the high affinity of mycobacteria for fibronectin, a large adhesive glycoprotein, which facilitates the attachment of Mycobacteria to murine alveolar macrophages (AMs). They also help to maintain the integrity of the cell wall by catalyzing the transfer of mycolic acids to cell wall arabinogalactan and through the synthesis of alpha,alpha-trehalose dimycolate (TDM, cord factor). They catalyze the transfer of a mycoloyl residue from one molecule of alpha,alpha-trehalose monomycolate (TMM) to another TMM, leading to the formation of TDM. The protein is Diacylglycerol acyltransferase/mycolyltransferase Ag85B (fbpB) of Mycobacterium bovis (strain BCG / Pasteur 1173P2).